Here is a 432-residue protein sequence, read N- to C-terminus: Serine--tRNA ligase (432 aa).

236 to 238 (TSE) contributes to the L-serine binding site. 267-269 (RSE) is a binding site for ATP. E290 contributes to the L-serine binding site. 354–357 (EISS) lines the ATP pocket. S390 lines the L-serine pocket.

The protein belongs to the class-II aminoacyl-tRNA synthetase family. Type-1 seryl-tRNA synthetase subfamily. In terms of assembly, homodimer. The tRNA molecule binds across the dimer.

The protein resides in the cytoplasm. The enzyme catalyses tRNA(Ser) + L-serine + ATP = L-seryl-tRNA(Ser) + AMP + diphosphate + H(+). The catalysed reaction is tRNA(Sec) + L-serine + ATP = L-seryl-tRNA(Sec) + AMP + diphosphate + H(+). The protein operates within aminoacyl-tRNA biosynthesis; selenocysteinyl-tRNA(Sec) biosynthesis; L-seryl-tRNA(Sec) from L-serine and tRNA(Sec): step 1/1. Functionally, catalyzes the attachment of serine to tRNA(Ser). Is also able to aminoacylate tRNA(Sec) with serine, to form the misacylated tRNA L-seryl-tRNA(Sec), which will be further converted into selenocysteinyl-tRNA(Sec). This chain is Serine--tRNA ligase, found in Pseudoalteromonas atlantica (strain T6c / ATCC BAA-1087).